The primary structure comprises 600 residues: MGNHGKLSRVSADRIRNFCIIAHIDHGKSTLADRLLDLTDAVPERERVDQILDTMELERERGITIKAQAVRLLYNRPDGVWTLNLIDTPGHVDFTYEVSRAIAACEGALLVVDASQGIQAQTLANLYLAMEHDLEIIPVLNKIDLPVADVPAATEELVELLGVEPEEVLKISAKTGEGVRGVLDAIVERIPPPRSEHPQTRALVFDSNYDPYRGVIALARVFDGGLKKGDRVQAMGSEEEFEILEVGCYSPKPTALPALQTGQVGYVVAGLKDIGALRVGDTITSADDPAPEPLPGYARVLPTVFCGLYPTEGDDFERLRDALARLQLNDASLFFEPENSRLGFGFRCGFLGLLHMEIVQERLEREFDLDLIVTSPSVKYQVVVDGEVREVTNPSDLPESYDEIREPVVRATIICPREHVGAVMGLCHEKRGVSVGMEYISSLRVQLTYDLPLAEVITDFFDQLKSRTRGYASYDYEPVGYQPADLVKVEVLVAGDPVDSLSIIVHRDKAYQRGRALVEKLKELIPRQQFEVPVQAAVGKRVIARETVRAYRKDVTAKCYGGDITRKRKLLEKQKAGKRRMKQVGRVEIPQEAFLAAIRI.

Positions 13–194 constitute a tr-type G domain; sequence DRIRNFCIIA…AIVERIPPPR (182 aa). Residues 25 to 30 and 141 to 144 each bind GTP; these read DHGKST and NKID.

It belongs to the TRAFAC class translation factor GTPase superfamily. Classic translation factor GTPase family. LepA subfamily.

It localises to the cell membrane. It catalyses the reaction GTP + H2O = GDP + phosphate + H(+). Required for accurate and efficient protein synthesis under certain stress conditions. May act as a fidelity factor of the translation reaction, by catalyzing a one-codon backward translocation of tRNAs on improperly translocated ribosomes. Back-translocation proceeds from a post-translocation (POST) complex to a pre-translocation (PRE) complex, thus giving elongation factor G a second chance to translocate the tRNAs correctly. Binds to ribosomes in a GTP-dependent manner. This Rubrobacter xylanophilus (strain DSM 9941 / JCM 11954 / NBRC 16129 / PRD-1) protein is Elongation factor 4.